A 201-amino-acid polypeptide reads, in one-letter code: Akirin-2 (201 aa).

Ser-18 and Ser-21 each carry phosphoserine. Residues 22–27 carry the Nuclear localization signal motif; that stretch reads PKRRRC. The residue at position 55 (Ser-55) is a Phosphoserine. The SYVS motif signature appears at 198–201; the sequence is SYVS.

It belongs to the akirin family. As to quaternary structure, homodimer. Interacts with IPO9; the interaction is direct. Associates with 20S and 26S proteasomes. Interacts with SMARCD1; promoting SWI/SNF complex recruitment. Interacts with NFKBIZ. Interacts with YWHAB. Polyubiquitinated. Polyubiquitination is dependent of UBR5 that extends pre-ubiquitinated AKIRIN2. As to expression, highly expressed in testis, cerebrum and cerebellum, and barely detectable in liver, heart, spleen and muscle. Also highly expressed in various tumor cells from hepatoma, glioblastoma and pheochromocytoma.

It is found in the nucleus. The protein localises to the cytoplasm. The protein resides in the membrane. Functionally, molecular adapter that acts as a bridge between a variety of multiprotein complexes, and which is involved in embryonic development, immunity, myogenesis and brain development. Plays a key role in nuclear protein degradation by promoting import of proteasomes into the nucleus: directly binds to fully assembled 20S proteasomes at one end and to nuclear import receptor IPO9 at the other end, bridging them together and mediating the import of pre-assembled proteasome complexes through the nuclear pore. Involved in innate immunity by regulating the production of interleukin-6 (IL6) downstream of Toll-like receptor (TLR): acts by bridging the NF-kappa-B inhibitor NFKBIZ and the SWI/SNF complex, leading to promote induction of IL6. Also involved in adaptive immunity by promoting B-cell activation. Involved in brain development: required for the survival and proliferation of cerebral cortical progenitor cells. Involved in myogenesis: required for skeletal muscle formation and skeletal development, possibly by regulating expression of muscle differentiation factors. Also plays a role in facilitating interdigital tissue regression during limb development. The chain is Akirin-2 from Rattus norvegicus (Rat).